The following is a 333-amino-acid chain: 4-hydroxyproline epimerase (333 aa).

Cys90 acts as the Proton acceptor in catalysis. Substrate is bound by residues 91–92 and Asp249; that span reads GH. The active-site Proton donor is the Cys253. 254–255 contacts substrate; that stretch reads GT.

This sequence belongs to the proline racemase family. In terms of assembly, homodimer.

It carries out the reaction trans-4-hydroxy-L-proline = cis-4-hydroxy-D-proline. Allows intracellular utilization of 4-hydroxyproline, one of the major constituents of host collagen, by converting 4-hydroxy-L-proline to 4-hydroxy-D-proline, which can be further metabolized by intracellular 4-hydroxy-D-proline oxidases. Strong B-cell mitogen. Plays an important role in the regulation of intra- and extracellular amino acid pools, allowing the bacterium to profit from host precursors and enzymatic pathways. The sequence is that of 4-hydroxyproline epimerase from Brucella abortus (strain S19).